The following is a 255-amino-acid chain: MRLTALPAFDDNYIWALVANDGRAVIVDPGQAAPVLEAAQREGFTPVAALLTHHHADHIGGVAELQQHFPALELYGPDDERMPSATRHVAHGDTVTALGIDFAVLEVPGHTRSHVAYVGDGHLFSGDTLFSLGCGRMFEGTPPQMFDALQRLASLPGETLVCCGHEYTLANAAFALHVDPTNAALQRRQQEAQAMRHAARPTLPISLKSELATNPFLRLHTPEIRAAAAAHASISITSDVDVFAELRRWKDAFRA.

Zn(2+) is bound by residues histidine 53, histidine 55, aspartate 57, histidine 58, histidine 110, aspartate 127, and histidine 165.

Belongs to the metallo-beta-lactamase superfamily. Glyoxalase II family. As to quaternary structure, monomer. Zn(2+) is required as a cofactor.

The catalysed reaction is an S-(2-hydroxyacyl)glutathione + H2O = a 2-hydroxy carboxylate + glutathione + H(+). Its pathway is secondary metabolite metabolism; methylglyoxal degradation; (R)-lactate from methylglyoxal: step 2/2. In terms of biological role, thiolesterase that catalyzes the hydrolysis of S-D-lactoyl-glutathione to form glutathione and D-lactic acid. This is Hydroxyacylglutathione hydrolase from Xanthomonas campestris pv. campestris (strain 8004).